Reading from the N-terminus, the 396-residue chain is Acetate kinase (396 aa).

Residue Asn-6 participates in Mg(2+) binding. Residue Lys-13 coordinates ATP. Arg-89 is a substrate binding site. The Proton donor/acceptor role is filled by Asp-145. ATP-binding positions include 205-209 (HLGNG), 280-282 (DMR), and 329-333 (GVGEN). Glu-383 is a binding site for Mg(2+).

Belongs to the acetokinase family. As to quaternary structure, homodimer. The cofactor is Mg(2+). Requires Mn(2+) as cofactor.

Its subcellular location is the cytoplasm. The enzyme catalyses acetate + ATP = acetyl phosphate + ADP. It participates in metabolic intermediate biosynthesis; acetyl-CoA biosynthesis; acetyl-CoA from acetate: step 1/2. Functionally, catalyzes the formation of acetyl phosphate from acetate and ATP. Can also catalyze the reverse reaction. In Mesoplasma florum (strain ATCC 33453 / NBRC 100688 / NCTC 11704 / L1) (Acholeplasma florum), this protein is Acetate kinase.